Consider the following 367-residue polypeptide: Histone RNA hairpin-binding protein (367 aa).

Polar residues predominate over residues 1-12 (MAQKTPTKGTRS). Disordered stretches follow at residues 1 to 24 (MAQK…SPIK) and 49 to 200 (EVTE…HWEE). Over residues 57–73 (LASRLEEERRCKSESRR) the composition is skewed to basic and acidic residues. The segment covering 147–156 (SNASTINEGA) has biased composition (polar residues). The segment covering 183 to 192 (SDSSSVASSP) has biased composition (low complexity). The interval 206-275 (CTDEAVLKRR…KWKRSLYEYC (70 aa)) is RNA-binding. Positions 342–367 (MDESTLKASTNTDPSAPTDFSKMSSH) are disordered. Over residues 347 to 356 (LKASTNTDPS) the composition is skewed to polar residues.

This sequence belongs to the SLBP family. In terms of processing, ubiquitinated by the CBC(fem-1) (Cul2-ElonginB-ElonginC) E3 ubiquitin-protein ligase complex, leading to its degradation.

Involved in histone pre-mRNA 3' processing. Required for chromosome condensation, progression of cell death and morphogenesis. The polypeptide is Histone RNA hairpin-binding protein (cdl-1) (Caenorhabditis elegans).